A 181-amino-acid chain; its full sequence is Adenine phosphoribosyltransferase (181 aa).

This sequence belongs to the purine/pyrimidine phosphoribosyltransferase family. As to quaternary structure, homodimer.

The protein localises to the cytoplasm. The enzyme catalyses AMP + diphosphate = 5-phospho-alpha-D-ribose 1-diphosphate + adenine. It functions in the pathway purine metabolism; AMP biosynthesis via salvage pathway; AMP from adenine: step 1/1. Its function is as follows. Catalyzes a salvage reaction resulting in the formation of AMP, that is energically less costly than de novo synthesis. The polypeptide is Adenine phosphoribosyltransferase (Shewanella woodyi (strain ATCC 51908 / MS32)).